A 637-amino-acid polypeptide reads, in one-letter code: Glutamate--cysteine ligase catalytic subunit (637 aa).

M1 bears the N-acetylmethionine mark. Phosphoserine is present on residues S5 and S8.

The protein belongs to the glutamate--cysteine ligase type 3 family. As to quaternary structure, heterodimer of a catalytic heavy chain and a regulatory light chain.

The catalysed reaction is L-cysteine + L-glutamate + ATP = gamma-L-glutamyl-L-cysteine + ADP + phosphate + H(+). The enzyme catalyses (2S)-2-aminobutanoate + L-glutamate + ATP = gamma-L-glutamyl-(2S)-2-aminobutanoate + ADP + phosphate + H(+). Its pathway is sulfur metabolism; glutathione biosynthesis; glutathione from L-cysteine and L-glutamate: step 1/2. With respect to regulation, feedback inhibition by glutathione. In terms of biological role, catalyzes the ATP-dependent ligation of L-glutamate and L-cysteine and participates in the first and rate-limiting step in glutathione biosynthesis. This is Glutamate--cysteine ligase catalytic subunit from Mus musculus (Mouse).